Consider the following 444-residue polypeptide: Phosphoglucosamine mutase (444 aa).

Residue Ser101 is the Phosphoserine intermediate of the active site. Residues Ser101, Asp240, Asp242, and Asp244 each contribute to the Mg(2+) site. Ser101 is modified (phosphoserine).

It belongs to the phosphohexose mutase family. Mg(2+) is required as a cofactor. Post-translationally, activated by phosphorylation.

It catalyses the reaction alpha-D-glucosamine 1-phosphate = D-glucosamine 6-phosphate. Functionally, catalyzes the conversion of glucosamine-6-phosphate to glucosamine-1-phosphate. In Photobacterium profundum (strain SS9), this protein is Phosphoglucosamine mutase.